The sequence spans 2894 residues: uncharacterized protein (2894 aa).

The chain crosses the membrane as a helical span at residues 8–28; that stretch reads ISIFVFTILLLSNVSLGLNVS. PbH1 repeat units follow at residues 543–567, 2085–2107, 2135–2156, 2158–2180, 2201–2223, 2224–2244, 2245–2266, 2267–2289, 2290–2311, 2341–2363, 2367–2389, 2390–2419, 2422–2444, 2455–2477, 2479–2501, 2512–2542, 2550–2582, 2589–2611, 2612–2633, and 2638–2660; these read EVRW…DISL, NYPL…SMLN, FGNI…VLYK, GNGI…YSKN, ISSI…LLEN, SSSS…YLKE, NYIS…EIVN, SSNV…AIFN, GENV…LSYG, LNNL…FIYS, ASNV…YIYG, VNAI…KISG, TKGV…SLEG, VENN…YIGG, VENV…LIQE, GTNI…TVGA, NGYI…EVYG, SLEF…LIGA, SKDI…TIPN, and PYNI…DLDD.

Its subcellular location is the membrane. This is an uncharacterized protein from Methanocaldococcus jannaschii (strain ATCC 43067 / DSM 2661 / JAL-1 / JCM 10045 / NBRC 100440) (Methanococcus jannaschii).